The following is a 518-amino-acid chain: Protein nucleotidyltransferase YdiU (518 aa).

Residues 1–10 are compositionally biased toward basic and acidic residues; the sequence is MTHLHFDNRL. A disordered region spans residues 1-25; it reads MTHLHFDNRLRQQLPGDPEEGARRR. ATP is bound by residues G100, G102, R103, K123, D135, G136, R193, and R200. The active-site Proton acceptor is the D270. Residues N271 and D280 each contribute to the Mg(2+) site. D280 provides a ligand contact to ATP.

This sequence belongs to the SELO family. The cofactor is Mg(2+). Requires Mn(2+) as cofactor.

The catalysed reaction is L-seryl-[protein] + ATP = 3-O-(5'-adenylyl)-L-seryl-[protein] + diphosphate. The enzyme catalyses L-threonyl-[protein] + ATP = 3-O-(5'-adenylyl)-L-threonyl-[protein] + diphosphate. It carries out the reaction L-tyrosyl-[protein] + ATP = O-(5'-adenylyl)-L-tyrosyl-[protein] + diphosphate. It catalyses the reaction L-histidyl-[protein] + UTP = N(tele)-(5'-uridylyl)-L-histidyl-[protein] + diphosphate. The catalysed reaction is L-seryl-[protein] + UTP = O-(5'-uridylyl)-L-seryl-[protein] + diphosphate. The enzyme catalyses L-tyrosyl-[protein] + UTP = O-(5'-uridylyl)-L-tyrosyl-[protein] + diphosphate. In terms of biological role, nucleotidyltransferase involved in the post-translational modification of proteins. It can catalyze the addition of adenosine monophosphate (AMP) or uridine monophosphate (UMP) to a protein, resulting in modifications known as AMPylation and UMPylation. The protein is Protein nucleotidyltransferase YdiU of Xanthomonas euvesicatoria pv. vesicatoria (strain 85-10) (Xanthomonas campestris pv. vesicatoria).